Consider the following 484-residue polypeptide: Acetyl-coenzyme A carboxylase carboxyl transferase subunit beta, chloroplastic (484 aa).

Positions 223–484 (LWIQCDNCYG…LHAFFPLNKN (262 aa)) constitute a CoA carboxyltransferase N-terminal domain. Zn(2+) is bound by residues C227, C230, C243, and C246. A C4-type zinc finger spans residues 227 to 246 (CDNCYGLMYKKVKMNVCEQC).

The protein belongs to the AccD/PCCB family. In terms of assembly, acetyl-CoA carboxylase is a heterohexamer composed of biotin carboxyl carrier protein, biotin carboxylase and 2 subunits each of ACCase subunit alpha and ACCase plastid-coded subunit beta (accD). The cofactor is Zn(2+).

The protein localises to the plastid. It is found in the chloroplast stroma. The enzyme catalyses N(6)-carboxybiotinyl-L-lysyl-[protein] + acetyl-CoA = N(6)-biotinyl-L-lysyl-[protein] + malonyl-CoA. It functions in the pathway lipid metabolism; malonyl-CoA biosynthesis; malonyl-CoA from acetyl-CoA: step 1/1. Component of the acetyl coenzyme A carboxylase (ACC) complex. Biotin carboxylase (BC) catalyzes the carboxylation of biotin on its carrier protein (BCCP) and then the CO(2) group is transferred by the transcarboxylase to acetyl-CoA to form malonyl-CoA. In Crucihimalaya wallichii (Rock-cress), this protein is Acetyl-coenzyme A carboxylase carboxyl transferase subunit beta, chloroplastic.